The primary structure comprises 538 residues: Putative amidase kk1C (538 aa).

Residues 1–32 (MTEPTWKTVASEKQQQRESKIPSEWQIPKSSH) form a disordered region. Active-site charge relay system residues include lysine 134 and serine 209. The Acyl-ester intermediate role is filled by serine 233.

It belongs to the amidase family.

The catalysed reaction is a monocarboxylic acid amide + H2O = a monocarboxylate + NH4(+). Its pathway is secondary metabolite biosynthesis. Putative amidase; part of the gene cluster that mediates the biosynthesis of KK-1, a novel cyclic depsipeptide with 10 residues which is a promising active compound with high activity against many plant pathogens, especially Botrytis cinerea. The role of kk1C in KK-1 biosynthesis has still to be determined. The nonribosomal peptide synthetase (NRPS) kk1B catalyzes the elongation and cyclization of the decapeptide chain composed of 1 D-lactic acid residue (D-Lac), 1 pipecolic acid residue (Pip), 1 aspartic acid residue (Asp), 1 isoleucine residue (Ile), 1 glycine residue (Gly), 1 tyrosine residue (Tyr) and 4 valine residues (Val). The Asp, Ile and 3 Val residues are N-methylated by the 5 methyltransferase domains from the NRPS (found in modules 3, 5, 6, 7 and 9), whereas the Tyr residue is O-methylated by the cluster encoded O-methyltransferase kk1A. The thioesterase kk1J is likely to be involved in the corrective mechanism of peptide chain synthesis. The D-lactate dehydrogenase kk1H is involved in the synthesis of D-lactic acid from pyruvic acid, which is recognized by the A domain of the first kk1B module. The pyrroline-5-carboxylate reductase kk1I is involved in the synthesis of the L-pipecolic acid residue of KK-1 from delta-1-pyrroline-5-carboxylate (P5C), a metabolic intermediate of lysine. It is still unclear how kk1C and kk1D are involved in the production of KK-1. The sequence is that of Putative amidase kk1C from Curvularia clavata.